Reading from the N-terminus, the 194-residue chain is IMP cyclohydrolase (194 aa).

This sequence belongs to the archaeal IMP cyclohydrolase family.

It carries out the reaction IMP + H2O = 5-formamido-1-(5-phospho-D-ribosyl)imidazole-4-carboxamide. It functions in the pathway purine metabolism; IMP biosynthesis via de novo pathway; IMP from 5-formamido-1-(5-phospho-D-ribosyl)imidazole-4-carboxamide: step 1/1. In terms of biological role, catalyzes the cyclization of 5-formylamidoimidazole-4-carboxamide ribonucleotide to IMP. The sequence is that of IMP cyclohydrolase from Halobacterium salinarum (strain ATCC 29341 / DSM 671 / R1).